The following is a 234-amino-acid chain: Multicopy suppressor of SEC21 protein 27 (234 aa).

The Cytoplasmic portion of the chain corresponds to 1–47 (MQTPLESTDVKLDTLNEPSAHLIEKNVALPKDIFRSYLSYWIYEIAR). T3 is subject to Phosphothreonine. The chain crosses the membrane as a helical span at residues 48–68 (YTPVMILSLVIGVLVLLIIFF). Over 69–72 (NDNE) the chain is Extracellular. A helical transmembrane segment spans residues 73–93 (ACVFNSAYYAYLSLVVLLIIL). Residues 94 to 234 (GDGNPKLVSR…NIDALLKKTE (141 aa)) lie on the Cytoplasmic side of the membrane. Residues 231–234 (KKTE) form a COPI binding region.

It belongs to the DUP/COS family. Interacts with MST28. Binds to coatomer proteins of COPI and SEC23/SEC24 of COPII coated vesicles.

The protein localises to the endoplasmic reticulum. It localises to the golgi apparatus. It is found in the cytoplasmic vesicle. Its subcellular location is the COPI-coated vesicle membrane. The protein resides in the COPII-coated vesicle membrane. Involved in protein trafficking vesicle formation, probably by stabilizing of coatomer at the Golgi membrane and thus allowing the efficient formation of COPI coated vesicles. This is Multicopy suppressor of SEC21 protein 27 (MST27) from Saccharomyces cerevisiae (strain ATCC 204508 / S288c) (Baker's yeast).